Consider the following 220-residue polypeptide: Ribose-5-phosphate isomerase A (220 aa).

Substrate-binding positions include 28-31, 81-84, and 94-97; these read TGST, DGAD, and KGGG. E103 acts as the Proton acceptor in catalysis. A substrate-binding site is contributed by K121.

The protein belongs to the ribose 5-phosphate isomerase family. Homodimer.

It carries out the reaction aldehydo-D-ribose 5-phosphate = D-ribulose 5-phosphate. The protein operates within carbohydrate degradation; pentose phosphate pathway; D-ribose 5-phosphate from D-ribulose 5-phosphate (non-oxidative stage): step 1/1. Functionally, catalyzes the reversible conversion of ribose-5-phosphate to ribulose 5-phosphate. This Coxiella burnetii (strain CbuK_Q154) (Coxiella burnetii (strain Q154)) protein is Ribose-5-phosphate isomerase A.